Here is a 181-residue protein sequence, read N- to C-terminus: Crossover junction endodeoxyribonuclease RuvC (181 aa).

Active-site residues include Asp7, Glu67, and Asp139. Mg(2+) contacts are provided by Asp7, Glu67, and Asp139.

It belongs to the RuvC family. Homodimer which binds Holliday junction (HJ) DNA. The HJ becomes 2-fold symmetrical on binding to RuvC with unstacked arms; it has a different conformation from HJ DNA in complex with RuvA. In the full resolvosome a probable DNA-RuvA(4)-RuvB(12)-RuvC(2) complex forms which resolves the HJ. Mg(2+) is required as a cofactor.

Its subcellular location is the cytoplasm. The catalysed reaction is Endonucleolytic cleavage at a junction such as a reciprocal single-stranded crossover between two homologous DNA duplexes (Holliday junction).. Functionally, the RuvA-RuvB-RuvC complex processes Holliday junction (HJ) DNA during genetic recombination and DNA repair. Endonuclease that resolves HJ intermediates. Cleaves cruciform DNA by making single-stranded nicks across the HJ at symmetrical positions within the homologous arms, yielding a 5'-phosphate and a 3'-hydroxyl group; requires a central core of homology in the junction. The consensus cleavage sequence is 5'-(A/T)TT(C/G)-3'. Cleavage occurs on the 3'-side of the TT dinucleotide at the point of strand exchange. HJ branch migration catalyzed by RuvA-RuvB allows RuvC to scan DNA until it finds its consensus sequence, where it cleaves and resolves the cruciform DNA. The protein is Crossover junction endodeoxyribonuclease RuvC of Cupriavidus necator (strain ATCC 17699 / DSM 428 / KCTC 22496 / NCIMB 10442 / H16 / Stanier 337) (Ralstonia eutropha).